The following is a 497-amino-acid chain: Putative diacyglycerol O-acyltransferase MT3584 (497 aa).

Residue H143 is the Proton acceptor of the active site.

It belongs to the long-chain O-acyltransferase family.

It catalyses the reaction an acyl-CoA + a 1,2-diacyl-sn-glycerol = a triacyl-sn-glycerol + CoA. Its pathway is glycerolipid metabolism; triacylglycerol biosynthesis. This is Putative diacyglycerol O-acyltransferase MT3584 from Mycobacterium tuberculosis (strain CDC 1551 / Oshkosh).